The chain runs to 332 residues: Probable electron transfer flavoprotein subunit alpha, mitochondrial (332 aa).

275–303 (LYIAIGISGAIQHLAGMKDSKVIVAINKD) provides a ligand contact to FAD.

It belongs to the ETF alpha-subunit/FixB family. In terms of assembly, heterodimer of an alpha and a beta subunit. FAD serves as cofactor.

The protein resides in the mitochondrion matrix. Its function is as follows. The electron transfer flavoprotein serves as a specific electron acceptor for several dehydrogenases, including five acyl-CoA dehydrogenases, glutaryl-CoA and sarcosine dehydrogenase. It transfers the electrons to the main mitochondrial respiratory chain via ETF-ubiquinone oxidoreductase (ETF dehydrogenase). The protein is Probable electron transfer flavoprotein subunit alpha, mitochondrial of Caenorhabditis elegans.